We begin with the raw amino-acid sequence, 393 residues long: Dual specificity mitogen-activated protein kinase kinase 1 (393 aa).

Positions 1-27 (MPKKKPTPIQLNPAPDGSAVNGTSSAE) are disordered. Residues 68–361 (FEKISELGAG…LKQLMVHAFI (294 aa)) form the Protein kinase domain. ATP contacts are provided by residues 74-82 (LGAGNGGVV), K97, 143-146 (MEHM), and 150-153 (SLDQ). K97 contributes to the U0126 binding site. Residue 144-146 (EHM) participates in K-252a binding. Catalysis depends on D190, which acts as the Proton acceptor. Residues 192 to 195 (KPSN) and D208 contribute to the ATP site. S194 is a binding site for K-252a. U0126 is bound at residue 208–211 (DFGV). S218 and S222 each carry phosphoserine; by BRAF and RAF1. The RAF1-binding stretch occupies residues 270 to 307 (ELELMFGCQVEGDAAETPPRPRTPGRPLSSYGMDSRPP). The residue at position 286 (T286) is a Phosphothreonine. T292 carries the post-translational modification Phosphothreonine; by MAPK1. S298 is subject to Phosphoserine; by PAK.

It belongs to the protein kinase superfamily. STE Ser/Thr protein kinase family. MAP kinase kinase subfamily. In terms of assembly, found in a complex with at least BRAF, HRAS, MAP2K1, MAPK3/ERK1 and RGS14. Forms a heterodimer with MAP2K2/MEK2. Forms heterodimers with KSR2 which further dimerize to form tetramers. Interacts with KSR1 or KSR2 and BRAF; the interaction with KSR1 or KSR2 mediates KSR1-BRAF or KSR2-BRAF dimerization. Interacts with ARBB2, LAMTOR3 and RAF1. Interacts with MAPK1/ERK2. Interacts with MORG1. Interacts with PPARG. Interacts with isoform 1 of VRK2. Interacts with SGK1. Interacts with BIRC6/bruce. Interacts with KAT7; the interaction promotes KAT7 phosphorylation. Interacts with RAF1 and NEK10; the interaction is required for ERK1/2-signaling pathway activation in response to UV irradiation. Interacts with TRAF3IP3. Interacts with MOS. (Microbial infection) Interacts with Yersinia YopJ. Phosphorylation at Ser-218 and Ser-222 by MAP kinase kinase kinases (BRAF or MEKK1) positively regulates kinase activity. Also phosphorylated at Thr-292 by MAPK1/ERK2 and at Ser-298 by PAK. MAPK1/ERK2 phosphorylation of Thr-292 occurs in response to cellular adhesion and leads to inhibition of Ser-298 phosphorylation by PAK. Autophosphorylated at Ser-218 and Ser-222, autophosphosphorylation is promoted by NEK10 following UV irradiation. In terms of processing, (Microbial infection) Acetylation by Yersinia YopJ prevents phosphorylation and activation, thus blocking the MAPK signaling pathway. As to expression, widely expressed, with extremely low levels in brain.

It localises to the cytoplasm. It is found in the cytoskeleton. Its subcellular location is the microtubule organizing center. The protein localises to the centrosome. The protein resides in the spindle pole body. It localises to the nucleus. It is found in the membrane. The catalysed reaction is L-seryl-[protein] + ATP = O-phospho-L-seryl-[protein] + ADP + H(+). It carries out the reaction L-threonyl-[protein] + ATP = O-phospho-L-threonyl-[protein] + ADP + H(+). The enzyme catalyses L-tyrosyl-[protein] + ATP = O-phospho-L-tyrosyl-[protein] + ADP + H(+). With respect to regulation, ras proteins such as HRAS mediate the activation of RAF proteins such as RAF1 or BRAF which in turn activate extracellular signal-regulated kinases (ERK) through MAPK (mitogen-activated protein kinases) and ERK kinases MAP2K1/MEK1 and MAP2K2/MEK2. Activation occurs through phosphorylation of Ser-218 and Ser-222. MAP2K1/MEK1 binds KSR1 or KSR2 releasing the inhibitory intramolecular interaction between KSR1 or KSR2 protein kinase and N-terminal domains. This allows KSR1 or KSR2 dimerization with BRAF leading to BRAF activation and phosphorylation of MAP2K1. MAP2K1/MEK1 is also the target of negative feed-back regulation by its substrate kinases, such as MAPK1/ERK2. These phosphorylate MAP2K1/MEK1 on Thr-292, thereby facilitating dephosphorylation of the activating residues Ser-218 and Ser-222. Inhibited by serine/threonine phosphatase 2A. Many inhibitors have been identified including pyrrole derivatives, TAK-733 (one of a series of 8-methylpyrido[2,3-d]pyrimidine-4,7(3H,8H)-dione derivatives), CH4987655 and RDEA119/BAY 869766. Dual specificity protein kinase which acts as an essential component of the MAP kinase signal transduction pathway. Binding of extracellular ligands such as growth factors, cytokines and hormones to their cell-surface receptors activates RAS and this initiates RAF1 activation. RAF1 then further activates the dual-specificity protein kinases MAP2K1/MEK1 and MAP2K2/MEK2. Both MAP2K1/MEK1 and MAP2K2/MEK2 function specifically in the MAPK/ERK cascade, and catalyze the concomitant phosphorylation of a threonine and a tyrosine residue in a Thr-Glu-Tyr sequence located in the extracellular signal-regulated kinases MAPK3/ERK1 and MAPK1/ERK2, leading to their activation and further transduction of the signal within the MAPK/ERK cascade. Activates BRAF in a KSR1 or KSR2-dependent manner; by binding to KSR1 or KSR2 releases the inhibitory intramolecular interaction between KSR1 or KSR2 protein kinase and N-terminal domains which promotes KSR1 or KSR2-BRAF dimerization and BRAF activation. Depending on the cellular context, this pathway mediates diverse biological functions such as cell growth, adhesion, survival and differentiation, predominantly through the regulation of transcription, metabolism and cytoskeletal rearrangements. One target of the MAPK/ERK cascade is peroxisome proliferator-activated receptor gamma (PPARG), a nuclear receptor that promotes differentiation and apoptosis. MAP2K1/MEK1 has been shown to export PPARG from the nucleus. The MAPK/ERK cascade is also involved in the regulation of endosomal dynamics, including lysosome processing and endosome cycling through the perinuclear recycling compartment (PNRC), as well as in the fragmentation of the Golgi apparatus during mitosis. In Homo sapiens (Human), this protein is Dual specificity mitogen-activated protein kinase kinase 1.